We begin with the raw amino-acid sequence, 868 residues long: Alanine--tRNA ligase (868 aa).

His556, His560, Cys666, and His670 together coordinate Zn(2+).

Belongs to the class-II aminoacyl-tRNA synthetase family. The cofactor is Zn(2+).

The protein localises to the cytoplasm. It carries out the reaction tRNA(Ala) + L-alanine + ATP = L-alanyl-tRNA(Ala) + AMP + diphosphate. Its function is as follows. Catalyzes the attachment of alanine to tRNA(Ala) in a two-step reaction: alanine is first activated by ATP to form Ala-AMP and then transferred to the acceptor end of tRNA(Ala). Also edits incorrectly charged Ser-tRNA(Ala) and Gly-tRNA(Ala) via its editing domain. The protein is Alanine--tRNA ligase of Elusimicrobium minutum (strain Pei191).